The primary structure comprises 141 residues: Translation initiation factor IF-1, chloroplastic (141 aa).

Residues 1-46 (MLQLCSTFRPQLLLPCQFRFTNGVLIPQINYVASNSVVNIRPMIRC) constitute a chloroplast transit peptide. The tract at residues 49–69 (ASGGRGGANRSKPAKPQVKEG) is disordered. Positions 63–138 (KPQVKEGSNK…TKGRIIFRMS (76 aa)) constitute an S1-like domain.

Belongs to the IF-1 family. As to quaternary structure, component of the 30S ribosomal translation pre-initiation complex which assembles on the 30S ribosome in the order IF-2 and IF-3, IF-1 and N-formylmethionyl-tRNA(fMet); mRNA recruitment can occur at any time during PIC assembly.

Its subcellular location is the plastid. It is found in the chloroplast. One of the essential components for the initiation of protein synthesis. Stabilizes the binding of IF-2 and IF-3 on the 30S subunit to which N-formylmethionyl-tRNA(fMet) subsequently binds. Helps modulate mRNA selection, yielding the 30S pre-initiation complex (PIC). Upon addition of the 50S ribosomal subunit IF-1, IF-2 and IF-3 are released leaving the mature 70S translation initiation complex. This is Translation initiation factor IF-1, chloroplastic from Arabidopsis thaliana (Mouse-ear cress).